The primary structure comprises 341 residues: Major histocompatibility complex class I-related protein 1 (341 aa).

The first 22 residues, 1-22 (MGELMAFLLPLIIVLMVKHSDS), serve as a signal peptide directing secretion. The tract at residues 23-109 (RTHSLRYFRL…KRLQRHYNHS (87 aa)) is alpha-1. Residues 23-201 (RTHSLRYFRL…EYGKDTLQRT (179 aa)) are antigen-binding cleft. The Extracellular segment spans residues 23 to 302 (RTHSLRYFRL…QESETIPLVM (280 aa)). 5-(2-oxoethylideneamino)-6-(D-ribitylamino)uracil-binding residues include Arg31, Ser46, and Lys65. Residues Arg31, Ser46, and Lys65 each contribute to the 5-(2-oxopropylideneamino)-6-(D-ribitylamino)uracil site. Residues Arg31, Ser46, and Lys65 each contribute to the 7-hydroxy-6-methyl-8-(1-D-ribityl)lumazine site. Arg31 provides a ligand contact to 8-(9H-purin-6-yl)-2-oxa-8-azabicyclo[3.3.1]nona-3,6-diene-4,6-dicarbaldehyde. Residues Lys65 and His80 each contribute to the 8-(9H-purin-6-yl)-2-oxa-8-azabicyclo[3.3.1]nona-3,6-diene-4,6-dicarbaldehyde site. Lys65 is a 2-amino-4-oxopteridine-6-carbaldehyde binding site. Lys65 serves as a coordination point for pyridoxal. A glycan (N-linked (GlcNAc...) asparagine) is linked at Asn107. Residues 110–201 (GSHTYQRMIG…EYGKDTLQRT (92 aa)) form an alpha-2 region. 5-(2-oxoethylideneamino)-6-(D-ribitylamino)uracil is bound by residues Arg116, Tyr174, and Gln175. Arg116, Tyr174, and Gln175 together coordinate 5-(2-oxopropylideneamino)-6-(D-ribitylamino)uracil. Positions 116, 174, and 175 each coordinate 7-hydroxy-6-methyl-8-(1-D-ribityl)lumazine. 8-(9H-purin-6-yl)-2-oxa-8-azabicyclo[3.3.1]nona-3,6-diene-4,6-dicarbaldehyde is bound at residue Arg116. 2 disulfide bridges follow: Cys120–Cys183 and Cys222–Cys278. The alpha-3 stretch occupies residues 202 to 293 (EPPLVRVNRK…GVHMVLQVPQ (92 aa)). In terms of domain architecture, Ig-like C1-type spans 203–299 (PPLVRVNRKE…QVPQESETIP (97 aa)). A connecting peptide region spans residues 294 to 302 (ESETIPLVM). A helical transmembrane segment spans residues 303–323 (KAVSGSIVLVIVLAGVGVLVW). At 324-341 (RRRPREQNGAIYLPTPDR) the chain is on the cytoplasmic side.

Belongs to the MHC class I family. Heterotrimer that consists of MR1, B2M and a metabolite antigen. Major classes of metabolite ligands presented by MR1 include riboflavin-related antigens, pyrimidines and ribityl lumazines, nucleobase adducts and folate derivatives. Forms reversible covalent Schiff base complexes with microbial pyrimidine-based metabolite, which serves as a molecular switch triggering complete folding, stable association with B2M and translocation of the ternary complex from endoplasmic reticulum to the plasma membrane. Alternatively, forms non-Schiff base complexes with ribityl lumazines. On antigen-presenting cells, the ternary complex interacts with TCR on MR1-restricted T cells, predominantly represented by CD8-positive and CD4- and CD8-double negative MAIT cell subsets. Interacts with TAPBP and TAPBPL chaperones in the endoplasmic reticulum. TAPBP associated or not with MHC class I peptide loading complex binds ligand-free MR1 or MR1-B2M complex, providing for stable MR1 pools ready for metabolite antigen processing. TAPBPL interacts with MR1 in a ligand-independent way; this interaction may stabilize MR1 pool and facilitate ligand loading and dissociation. MR1-B2M heterodimer adopts a topology similar to classical MHC class I molecules, with alpha-1 and alpha-2 domains of MR1 forming the antigen-binding cleft composed of two alpha-helices resting on a floor of 7-stranded anti-parallel beta-pleated sheet. The ribityl moiety of pyrimidine-based antigens is recognized by Tyr-95 residue in the CDR3 alpha loop of the invariant TRAV1-2 TCR. As to quaternary structure, homodimerizes and does not associate with B2M. In terms of processing, N-glycosylated. Ubiquitous. Low expression is detected in peripheral blood B cells, T cells, monocytes and in bronchial epithelial cells (at protein level). Expressed in plasmablasts or plasma B cells in the lamina propria of ileum, appendix and colon (at protein level). Highly expressed on a subset of CD45-positive CD3-positive thymocytes (at protein level).

Its subcellular location is the cell membrane. It is found in the endoplasmic reticulum membrane. The protein resides in the golgi apparatus membrane. The protein localises to the early endosome membrane. It localises to the late endosome membrane. Its subcellular location is the secreted. With respect to regulation, inhibited by pterin-based metabolites such as 6-formylpterin (6-FP, a product of folic acid photodegradation). 6-FP competitively inhibits MAIT cell activation by 5-OP-RU. Modulated by commonly prescribed anti-inflammatory drug metabolites. Inhibited by salicilates such as 3-formylsalicylic and 5-formylsalicylic acids. Activated by diclofenac and/or its hydroxy metabolites. Antigen-presenting molecule specialized in displaying microbial pyrimidine-based metabolites to alpha-beta T cell receptors (TCR) on innate-type mucosal-associated invariant T (MAIT) cells. In complex with B2M preferentially presents riboflavin-derived metabolites to semi-invariant TRAV1.2 TCRs on MAIT cells, guiding immune surveillance of the microbial metabolome at mucosal epithelial barriers. Signature pyrimidine-based microbial antigens are generated via non-enzymatic condensation of metabolite intermediates of the riboflavin pathway with by-products arising from other metabolic pathways such as glycolysis. Typical potent antigenic metabolites are 5-(2-oxoethylideneamino)-6-D-ribitylaminouracil (5-OE-RU) and 5-(2-oxopropylideneamino)-6-D-ribitylaminouracil (5-OP-RU), products of condensation of 5-amino-6-D-ribityaminouracil (5-A-RU) with glyoxal or methylglyoxal by-products, respectively. May present microbial antigens to various TRAV1-2-negative MAIT cell subsets, providing for unique recognition of diverse microbes, including pathogens that do not synthesize riboflavin. Upon antigen recognition, elicits rapid innate-type MAIT cell activation to eliminate pathogenic microbes by directly killing infected cells. During T cell development, drives thymic selection and post-thymic terminal differentiation of MAIT cells in a process dependent on commensal microflora. Acts as an immune sensor of cancer cell metabolome. May present a tumor-specific or -associated metabolite essential for cancer cell survival to a 'pan-cancer' TCR consisting of TRAV38.2-DV8*TRAJ31 alpha chain paired with a TRBV25.1*TRBJ2.3 beta chain on a non-MAIT CD8-positive T cell clone (MC.7.G5), triggering T cell-mediated killing of a wide range of cancer cell types. In terms of biological role, allele MR1*01: Presents microbial-derived metabolite 5-OP-RU to semi-invariant TRAV1.2-TRAJ33-TRBV6.1 (A-F7) TCR on MAIT cells. Presents nucleobase carbonyl adducts generated during oxidative stress. Captures M3Ade, a nucleobase adduct composed of one adenine modified by a malondialdehyde trimer, for recognition by MR1-restricted T cell clones expressing a polyclonal TCR repertoire. Displays moderate binding affinity toward tumor-enriched pyridoxal and pyridoxal 5'-phosphate antigens. Its function is as follows. Allele MR1*04: Presents tumor-enriched metabolite pyridoxal to pan-cancer 7.G5 TCR on T cells enabling preferential recognition of cancer cells. May act as an alloantigen. The protein is Major histocompatibility complex class I-related protein 1 of Homo sapiens (Human).